An 888-amino-acid chain; its full sequence is Interference hedgehog (888 aa).

The signal sequence occupies residues 1 to 24 (MSLTRFSLCLLLTLLLAAIPVYLA). Topologically, residues 25-688 (SPDPGVRILR…SHNETFNLNP (664 aa)) are extracellular. Ig-like C2-type domains lie at 28-123 (PGVR…ARLE), 134-215 (EGFK…VRLA), 234-321 (PHLL…SIQL), and 327-414 (PRIV…LQVN). 3 disulfide bridges follow: Cys-51–Cys-106, Cys-155–Cys-203, and Cys-257–Cys-305. Asn-80, Asn-185, Asn-192, Asn-281, Asn-336, Asn-365, Asn-369, and Asn-455 each carry an N-linked (GlcNAc...) asparagine glycan. Residues Cys-348 and Cys-396 are joined by a disulfide bond. 2 consecutive Fibronectin type-III domains span residues 450-557 (PPSA…LQRG) and 565-660 (VPSL…TQRP). 2 residues coordinate heparin: Arg-486 and Lys-493. Asn-516 is a glycosylation site (N-linked (GlcNAc...) asparagine). Position 531 (Arg-531) interacts with heparin. Asn-547 carries an N-linked (GlcNAc...) asparagine glycan. Residues 655-667 (GRTQRPRVSTTTE) are compositionally biased toward polar residues. Residues 655-679 (GRTQRPRVSTTTEPAVHAMDTTTPS) are disordered. Asn-681 is a glycosylation site (N-linked (GlcNAc...) asparagine). Residues 689–709 (LLTGTIGGGALLVLLVVSACL) traverse the membrane as a helical segment. Residues 710–888 (CLCRRRSSRG…SSGSLNSVGV (179 aa)) are Cytoplasmic-facing. 3 disordered regions span residues 759–789 (AQQQQQQQQQQQQQQQQQHEEKDTQDNDMSY), 812–864 (SSSL…PGRV), and 869–888 (ARLSSRSENLSSGSLNSVGV). Residues 760–775 (QQQQQQQQQQQQQQQQ) are compositionally biased toward low complexity. The span at 843–859 (QPTDGSTADSPRLQASN) shows a compositional bias: polar residues. Low complexity predominate over residues 872-888 (SSRSENLSSGSLNSVGV).

Belongs to the immunoglobulin superfamily. IHOG family. As to quaternary structure, homodimer. Heterotetramer; 2 iHog chains bind 2 hh chains when facilitated by heparin, heparin is required to promote high-affinity interactions between hh and iHog.

The protein localises to the membrane. In terms of biological role, mediates response to the active Hedgehog (Hh) protein signal in embryos, functioning upstream or at the level of patched (ptc). This is Interference hedgehog from Drosophila grimshawi (Hawaiian fruit fly).